A 454-amino-acid chain; its full sequence is Putative F-box/LRR-repeat protein At3g58880 (454 aa).

An F-box domain is found at 2–48 (VDLVSSLPDDLLGHILSLLTTKEAALTSILSKRWRYLIAFVPYLEFD). 7 LRR repeats span residues 77–102 (LALH…DLLN), 144–168 (SGCR…TLDS), 169–194 (VSWS…NLAN), 214–240 (IKSV…NYTA), 270–301 (LVSV…YLSP), 303–327 (TLQV…VIES), and 328–353 (SMDI…VIKG).

This is Putative F-box/LRR-repeat protein At3g58880 from Arabidopsis thaliana (Mouse-ear cress).